The primary structure comprises 379 residues: Pathogen-associated molecular patterns-induced protein A70 (379 aa).

Residues 7–29 form a helical membrane-spanning segment; the sequence is VASFFTPTTLFLLLNLMIGTIVV. Asn-122 is a glycosylation site (N-linked (GlcNAc...) asparagine). A disordered region spans residues 133 to 154; the sequence is TGSDPHSHSHSHLDLHPDPAPA. A compositionally biased stretch (basic and acidic residues) spans 137-149; that stretch reads PHSHSHSHLDLHP. Asn-170 carries an N-linked (GlcNAc...) asparagine glycan. 2 disordered regions span residues 216–238 and 256–347; these read PEEDQPTGTGVNSQINPPGLTRA and SDPD…DGVD. The segment covering 221-231 has biased composition (polar residues); it reads PTGTGVNSQIN. 2 stretches are compositionally biased toward basic and acidic residues: residues 256–285 and 322–335; these read SDPDLDQKQNPDPVLHEEHKHVRSKSESKK and SLERRRPDTTRVER.

Its subcellular location is the membrane. This is Pathogen-associated molecular patterns-induced protein A70 from Arabidopsis thaliana (Mouse-ear cress).